The following is a 507-amino-acid chain: Cytochrome P450 71D2 (507 aa).

A run of 2 helical transmembrane segments spans residues 6–26 (LPFNLVTFFIFLFFVFLLIYG) and 447–467 (ICPGMTFGLANVHLVLALLLY). Cys448 is a heme binding site.

This sequence belongs to the cytochrome P450 family.

The protein localises to the membrane. The polypeptide is Cytochrome P450 71D2 (Catharanthus roseus (Madagascar periwinkle)).